The primary structure comprises 386 residues: 11-beta-hydroxysteroid dehydrogenase type 2 (386 aa).

82 to 111 (TRAVLITGCDTGFGKETAKKLDAMGFTVLA) lines the NAD(+) pocket. Ser-219 provides a ligand contact to substrate. Tyr-232 (proton acceptor) is an active-site residue.

It belongs to the short-chain dehydrogenases/reductases (SDR) family. As to quaternary structure, interacts with ligand-free cytoplasmic NR3C2. As to expression, highly expressed in kidney. Also found in colon and small intestine. Not expressed in the adrenal gland. Expressed in uterus.

The protein resides in the microsome. It is found in the endoplasmic reticulum. It catalyses the reaction an 11beta-hydroxysteroid + NAD(+) = an 11-oxosteroid + NADH + H(+). The enzyme catalyses corticosterone + NAD(+) = 11-dehydrocorticosterone + NADH + H(+). The catalysed reaction is 11beta,17beta-dihydroxyandrost-4-ene-3-one + NAD(+) = 17beta-hydroxyandrost-4-ene-3,11-dione + NADH + H(+). It carries out the reaction 11beta-hydroxyandrost-4-ene-3,17-dione + NAD(+) = androst-4-ene-3,11,17-trione + NADH + H(+). It participates in steroid metabolism. Its activity is regulated as follows. Inhibited by glycyrrhetinic acid. Induced by progesterone, through the Ihh signaling pathway. Functionally, catalyzes the conversion of biologically active 11beta-hydroxyglucocorticoids (11beta-hydroxysteroid) such as corticosterone, to inactive 11-ketoglucocorticoids (11-oxosteroid) such as 11-dehydrocorticosterone, in the presence of NAD(+). Functions as a dehydrogenase (oxidase), thereby decreasing the concentration of active glucocorticoids, thus protecting the nonselective mineralocorticoid receptor from occupation by glucocorticoids. Plays an important role in maintaining glucocorticoids balance during preimplantation and protects the fetus from excessive maternal corticosterone exposure. Catalyzes the oxidation of 11beta-hydroxytestosterone (11beta,17beta-dihydroxyandrost-4-ene-3-one) to 11-ketotestosterone (17beta-hydroxyandrost-4-ene-3,11-dione), a major bioactive androgen. Catalyzes the conversion of 11beta-hydroxyandrostenedione (11beta-hydroxyandrost-4-ene-3,17-dione) to 11-ketoandrostenedione (androst-4-ene-3,11,17-trione), which can be further metabolized to 11-ketotestosterone. Converts 7-beta-25-dihydroxycholesterol to 7-oxo-25-hydroxycholesterol in vitro. 7-beta-25-dihydroxycholesterol (not 7-oxo-25-hydroxycholesterol) acts as a ligand for the G-protein-coupled receptor (GPCR) Epstein-Barr virus-induced gene 2 (EBI2) and may thereby regulate immune cell migration. The chain is 11-beta-hydroxysteroid dehydrogenase type 2 (Hsd11b2) from Mus musculus (Mouse).